Here is a 657-residue protein sequence, read N- to C-terminus: Glycogen debranching enzyme (657 aa).

The active-site Nucleophile is the D336. E371 functions as the Proton donor in the catalytic mechanism. The disordered stretch occupies residues 460 to 479 (ANGEENRDGTNNNYSNNHGK).

It belongs to the glycosyl hydrolase 13 family.

It carries out the reaction Hydrolysis of (1-&gt;6)-alpha-D-glucosidic linkages to branches with degrees of polymerization of three or four glucose residues in limit dextrin.. The protein operates within glycan degradation; glycogen degradation. Its function is as follows. Removes maltotriose and maltotetraose chains that are attached by 1,6-alpha-linkage to the limit dextrin main chain, generating a debranched limit dextrin. This chain is Glycogen debranching enzyme, found in Shigella dysenteriae serotype 1 (strain Sd197).